We begin with the raw amino-acid sequence, 306 residues long: Ribosomal RNA small subunit methyltransferase H (306 aa).

S-adenosyl-L-methionine is bound by residues 33 to 35 (GGY), Asp-51, Phe-78, Asp-96, and Gln-103.

This sequence belongs to the methyltransferase superfamily. RsmH family.

It localises to the cytoplasm. It carries out the reaction cytidine(1402) in 16S rRNA + S-adenosyl-L-methionine = N(4)-methylcytidine(1402) in 16S rRNA + S-adenosyl-L-homocysteine + H(+). Specifically methylates the N4 position of cytidine in position 1402 (C1402) of 16S rRNA. This Rickettsia typhi (strain ATCC VR-144 / Wilmington) protein is Ribosomal RNA small subunit methyltransferase H.